The sequence spans 263 residues: Acyl-[acyl-carrier-protein]--UDP-N-acetylglucosamine O-acyltransferase (263 aa).

The protein belongs to the transferase hexapeptide repeat family. LpxA subfamily. As to quaternary structure, homotrimer.

It is found in the cytoplasm. The catalysed reaction is a (3R)-hydroxyacyl-[ACP] + UDP-N-acetyl-alpha-D-glucosamine = a UDP-3-O-[(3R)-3-hydroxyacyl]-N-acetyl-alpha-D-glucosamine + holo-[ACP]. It functions in the pathway glycolipid biosynthesis; lipid IV(A) biosynthesis; lipid IV(A) from (3R)-3-hydroxytetradecanoyl-[acyl-carrier-protein] and UDP-N-acetyl-alpha-D-glucosamine: step 1/6. Functionally, involved in the biosynthesis of lipid A, a phosphorylated glycolipid that anchors the lipopolysaccharide to the outer membrane of the cell. The sequence is that of Acyl-[acyl-carrier-protein]--UDP-N-acetylglucosamine O-acyltransferase from Xanthomonas oryzae pv. oryzae (strain PXO99A).